The sequence spans 356 residues: Phosphatidylglycerol--prolipoprotein diacylglyceryl transferase (356 aa).

4 helical membrane-spanning segments follow: residues 24–44 (IKWY…LACV), 59–79 (WFVF…SFII), 103–123 (LAIE…FPLV), and 144–164 (VSMW…QIIG). Position 165 (arginine 165) interacts with a 1,2-diacyl-sn-glycero-3-phospho-(1'-sn-glycerol). Helical transmembrane passes span 209–229 (PFFL…YIGG) and 265–285 (FATS…LLVC).

Belongs to the Lgt family.

It is found in the cell membrane. The enzyme catalyses L-cysteinyl-[prolipoprotein] + a 1,2-diacyl-sn-glycero-3-phospho-(1'-sn-glycerol) = an S-1,2-diacyl-sn-glyceryl-L-cysteinyl-[prolipoprotein] + sn-glycerol 1-phosphate + H(+). It functions in the pathway protein modification; lipoprotein biosynthesis (diacylglyceryl transfer). Functionally, catalyzes the transfer of the diacylglyceryl group from phosphatidylglycerol to the sulfhydryl group of the N-terminal cysteine of a prolipoprotein, the first step in the formation of mature lipoproteins. The chain is Phosphatidylglycerol--prolipoprotein diacylglyceryl transferase from Malacoplasma penetrans (strain HF-2) (Mycoplasma penetrans).